The chain runs to 143 residues: Large ribosomal subunit protein uL15 (143 aa).

Positions 1–52 are disordered; it reads MKLNTLAPAAGSKSAPKRLGRGIGSGLGKTSGKGHKGQKARSGGYHKVGFEG. Positions 21–31 are enriched in gly residues; the sequence is RGIGSGLGKTS.

The protein belongs to the universal ribosomal protein uL15 family. In terms of assembly, part of the 50S ribosomal subunit.

Its function is as follows. Binds to the 23S rRNA. This chain is Large ribosomal subunit protein uL15, found in Francisella tularensis subsp. tularensis (strain FSC 198).